A 357-amino-acid polypeptide reads, in one-letter code: Phosphoribosylformylglycinamidine cyclo-ligase (357 aa).

Belongs to the AIR synthase family.

It is found in the cytoplasm. It carries out the reaction 2-formamido-N(1)-(5-O-phospho-beta-D-ribosyl)acetamidine + ATP = 5-amino-1-(5-phospho-beta-D-ribosyl)imidazole + ADP + phosphate + H(+). Its pathway is purine metabolism; IMP biosynthesis via de novo pathway; 5-amino-1-(5-phospho-D-ribosyl)imidazole from N(2)-formyl-N(1)-(5-phospho-D-ribosyl)glycinamide: step 2/2. The protein is Phosphoribosylformylglycinamidine cyclo-ligase of Rhodopseudomonas palustris (strain ATCC BAA-98 / CGA009).